A 288-amino-acid polypeptide reads, in one-letter code: Ninja-family protein 6 (288 aa).

Disordered stretches follow at residues 1–50 (MASR…KRPR) and 66–207 (LHAD…TRTG). Gly residues predominate over residues 12-23 (AGEGAGPPGDAG). Low complexity predominate over residues 76-86 (LPLLRTTSLPT). The segment covering 91 to 103 (ERWRRREMQSRRR) has biased composition (basic and acidic residues). Polar residues predominate over residues 131–173 (RRSNASQGSNSASTTEQGIGGSMFNQSADAKSPSTSDNRNQND). Positions 195 to 207 (RLRTLGSLTTRTG) are enriched in low complexity.

The protein belongs to the Ninja family.

It localises to the nucleus. This is Ninja-family protein 6 from Zea mays (Maize).